Consider the following 372-residue polypeptide: Peptide chain release factor 2 (372 aa).

Gln253 carries the post-translational modification N5-methylglutamine.

It belongs to the prokaryotic/mitochondrial release factor family. Methylated by PrmC. Methylation increases the termination efficiency of RF2.

It is found in the cytoplasm. Functionally, peptide chain release factor 2 directs the termination of translation in response to the peptide chain termination codons UGA and UAA. This Mycolicibacterium gilvum (strain PYR-GCK) (Mycobacterium gilvum (strain PYR-GCK)) protein is Peptide chain release factor 2.